The sequence spans 332 residues: Phenylalanine--tRNA ligase alpha subunit (332 aa).

Position 254 (Glu-254) interacts with Mg(2+).

The protein belongs to the class-II aminoacyl-tRNA synthetase family. Phe-tRNA synthetase alpha subunit type 1 subfamily. In terms of assembly, tetramer of two alpha and two beta subunits. The cofactor is Mg(2+).

Its subcellular location is the cytoplasm. It carries out the reaction tRNA(Phe) + L-phenylalanine + ATP = L-phenylalanyl-tRNA(Phe) + AMP + diphosphate + H(+). This is Phenylalanine--tRNA ligase alpha subunit from Hydrogenovibrio crunogenus (strain DSM 25203 / XCL-2) (Thiomicrospira crunogena).